The chain runs to 450 residues: Probable ATP-dependent RNA helicase MG425 homolog (450 aa).

The short motif at 3–31 is the Q motif element; sequence STFNELGVSPALIATLKDNNINQPTTIQQ. Positions 34-206 constitute a Helicase ATP-binding domain; it reads IPQFLQHQNL…KQITKNGIFL (173 aa). 47–54 is an ATP binding site; sequence SPTGTGKT. Positions 154–157 match the DEVD box motif; that stretch reads DEVD. In terms of domain architecture, Helicase C-terminal spans 234-384; that stretch reads RKKQALYSLV…PLRPMRLRLI (151 aa). The tract at residues 429–450 is disordered; the sequence is MRQPERDMQKNKLHDSDWQSNM. Basic and acidic residues predominate over residues 430–450; the sequence is RQPERDMQKNKLHDSDWQSNM.

The protein belongs to the DEAD box helicase family.

The enzyme catalyses ATP + H2O = ADP + phosphate + H(+). The chain is Probable ATP-dependent RNA helicase MG425 homolog from Mycoplasma pneumoniae (strain ATCC 29342 / M129 / Subtype 1) (Mycoplasmoides pneumoniae).